We begin with the raw amino-acid sequence, 71 residues long: Long neurotoxin 2 (71 aa).

5 cysteine pairs are disulfide-bonded: C3–C20, C14–C41, C26–C30, C45–C56, and C57–C62.

It belongs to the three-finger toxin family. Long-chain subfamily. Type II alpha-neurotoxin sub-subfamily. Expressed by the venom gland.

The protein resides in the secreted. Its function is as follows. Binds with high affinity to muscular (alpha-1/CHRNA1) and neuronal (alpha-7/CHRNA7) nicotinic acetylcholine receptor (nAChR) and inhibits acetylcholine from binding to the receptor, thereby impairing neuromuscular and neuronal transmission. This is Long neurotoxin 2 from Naja naja (Indian cobra).